Here is a 94-residue protein sequence, read N- to C-terminus: Protein SKIP34 (94 aa).

The interval 1–27 (MCYGHNQSLSSRSSLRRRSHDGEDDSV) is disordered. The stretch at 23-61 (EDDSVVDDLRDRLAETEARLRRARAREAELSRRLEHMKR) forms a coiled coil.

As to quaternary structure, interacts with SPK1B/ASK2.

The polypeptide is Protein SKIP34 (SKIP34) (Arabidopsis thaliana (Mouse-ear cress)).